The following is a 192-amino-acid chain: MLPPALNIPKWLEANSHLLQPPVNNYCVYHPSSPATAGYTVMIVGGPNARTDYHINTTPEFFYQYRGSMLLRTVDTSASPPVFQDIPIHEGSLFLLPANTPHCPVRFKDTVGVVMEQPRAEGAVDILRWYCKSCGEIVWEKRFVCTDLGTQVKEVVEEFGADQEKRTCKACGTVAETKYKEGELVQPPRFLE.

Position 50 (R50) interacts with O2. Fe cation contacts are provided by H54, E60, and H102. E60 contacts substrate. Residues R106 and E116 each coordinate substrate. A divalent metal cation contacts are provided by C131, C134, C168, and C171.

The protein belongs to the 3-HAO family. Fe(2+) is required as a cofactor.

The protein resides in the cytoplasm. The catalysed reaction is 3-hydroxyanthranilate + O2 = (2Z,4Z)-2-amino-3-carboxymuconate 6-semialdehyde. The protein operates within cofactor biosynthesis; NAD(+) biosynthesis; quinolinate from L-kynurenine: step 3/3. In terms of biological role, catalyzes the oxidative ring opening of 3-hydroxyanthranilate to 2-amino-3-carboxymuconate semialdehyde, which spontaneously cyclizes to quinolinate. This chain is 3-hydroxyanthranilate 3,4-dioxygenase 1 (bna1-1), found in Aspergillus oryzae (strain ATCC 42149 / RIB 40) (Yellow koji mold).